The sequence spans 216 residues: Large ribosomal subunit protein uL3 (216 aa).

Positions 137–158 (GASHGAHKNHRKPGSIGGASTP) are disordered.

This sequence belongs to the universal ribosomal protein uL3 family. As to quaternary structure, part of the 50S ribosomal subunit. Forms a cluster with proteins L14 and L19.

One of the primary rRNA binding proteins, it binds directly near the 3'-end of the 23S rRNA, where it nucleates assembly of the 50S subunit. This chain is Large ribosomal subunit protein uL3, found in Arthrobacter sp. (strain FB24).